Reading from the N-terminus, the 140-residue chain is uncharacterized protein (140 aa).

This is an uncharacterized protein from Bacillus subtilis (strain 168).